The sequence spans 231 residues: NADH-ubiquinone oxidoreductase chain 4 (231 aa).

A run of 6 helical transmembrane segments spans residues 1–21 (PIAG…YGII), 34–54 (LFLP…LTCL), 63–85 (IAYS…TPWG), 89–111 (AMAL…NTTY), 118–138 (ILIL…WWLL), and 156–176 (LLIM…LGLS).

It belongs to the complex I subunit 4 family.

The protein resides in the mitochondrion membrane. The enzyme catalyses a ubiquinone + NADH + 5 H(+)(in) = a ubiquinol + NAD(+) + 4 H(+)(out). Its function is as follows. Core subunit of the mitochondrial membrane respiratory chain NADH dehydrogenase (Complex I) that is believed to belong to the minimal assembly required for catalysis. Complex I functions in the transfer of electrons from NADH to the respiratory chain. The immediate electron acceptor for the enzyme is believed to be ubiquinone. The polypeptide is NADH-ubiquinone oxidoreductase chain 4 (MT-ND4) (Ovophis okinavensis (Ryukyu Island pit viper)).